The following is a 349-amino-acid chain: Cyclic AMP-dependent transcription factor ATF-4 (349 aa).

Disordered regions lie at residues 49-75 (FSSDKAGSSEWPAMDDGLASASDTGKE), 204-271 (PPCV…TAKV), and 279-298 (KLKKMEQNKTAATRYRQKKR). Proline 60 is modified (4-hydroxyproline). Threonine 212 is subject to Phosphothreonine. Serine 214, serine 218, serine 223, serine 230, and serine 234 each carry phosphoserine. The short motif at 214-223 (SDNDSGICMS) is the BetaTrCP degron motif element. Residues 229-239 (GSPQHSPSTSR) show a composition bias toward polar residues. At proline 235 the chain carries 4-hydroxyproline. A Phosphoserine modification is found at serine 247. Residue serine 251 is modified to Phosphoserine; by RPS6KA3. Glycyl lysine isopeptide (Lys-Gly) (interchain with G-Cter in SUMO2) cross-links involve residues lysine 258 and lysine 270. One can recognise a bZIP domain in the interval 276 to 339 (LDKKLKKMEQ…QYLKDLIEEV (64 aa)). The segment at 278 to 298 (KKLKKMEQNKTAATRYRQKKR) is basic motif. The interaction with GABBR1 stretch occupies residues 303–339 (ALTGECKELEKKNEALKEKADSLAKEIQYLKDLIEEV). The segment at 304 to 332 (LTGECKELEKKNEALKEKADSLAKEIQYL) is leucine-zipper. Residue lysine 309 is modified to N6-acetyllysine.

Belongs to the bZIP family. Binds DNA as a homodimer and as a heterodimer. Heterodimer; heterodimerizes with CEBPB. Heterodimer; heterodimerizes with DDIT3/CHOP. Interacts with CEP290 (via an N-terminal region). Interacts with NEK6, DAPK2 (isoform 2) and ZIPK/DAPK3. Interacts (via its leucine zipper domain) with GABBR1 and GABBR2 (via their C-termini). Forms a heterodimer with TXLNG in osteoblasts. Interacts (via its DNA binding domain) with FOXO1 (C-terminal half); the interaction occurs in osteoblasts and regulates glucose homeostasis through suppression of beta-cell proliferation and a decrease in insulin production. Interacts with SATB2; the interaction results in enhanced DNA binding and transactivation by these transcription factors. Interacts with ABRAXAS2. Interacts with TRIB3, inhibiting the transactivation activity of ATF4. Interacts with DISC1; which inhibits ATF4 transcription factor activity by disrupting ATF4 dimerization and DNA-binding. Interacts with EP300/p300; EP300/p300 stabilizes ATF4 and increases its transcriptional activity independently of its catalytic activity by preventing its ubiquitination. In terms of processing, ubiquitinated by SCF(BTRC) in response to mTORC1 signal, followed by proteasomal degradation and leading to down-regulate expression of SIRT4. Interaction with EP300/p300 inhibits ubiquitination by SCF(BTRC). Phosphorylation at Ser-251 by RPS6KA3/RSK2 in osteoblasts enhances transactivation activity and promotes osteoblast differentiation. Phosphorylated on the betaTrCP degron motif at Ser-218, followed by phosphorylation at Thr-212, Ser-223, Ser-230, Ser-234 and Ser-247, promoting interaction with BTRC and ubiquitination. Phosphorylation is promoted by mTORC1. Phosphorylation at Ser-214 by CK2 decreases its stability. Phosphorylated by NEK6. Post-translationally, hydroxylated by PHD3, leading to decreased protein stability. In terms of tissue distribution, ubiquitously expressed in adults.

It localises to the nucleus. The protein localises to the nucleus speckle. It is found in the cytoplasm. The protein resides in the cell membrane. Its subcellular location is the cytoskeleton. It localises to the microtubule organizing center. The protein localises to the centrosome. Its function is as follows. Transcription factor that binds the cAMP response element (CRE) (consensus: 5'-GTGACGT[AC][AG]-3') and displays two biological functions, as regulator of metabolic and redox processes under normal cellular conditions, and as master transcription factor during integrated stress response (ISR). Binds to asymmetric CRE's as a heterodimer and to palindromic CRE's as a homodimer. Core effector of the ISR, which is required for adaptation to various stress such as endoplasmic reticulum (ER) stress, amino acid starvation, mitochondrial stress or oxidative stress. During ISR, ATF4 translation is induced via an alternative ribosome translation re-initiation mechanism in response to EIF2S1/eIF-2-alpha phosphorylation, and stress-induced ATF4 acts as a master transcription factor of stress-responsive genes in order to promote cell recovery. Promotes the transcription of genes linked to amino acid sufficiency and resistance to oxidative stress to protect cells against metabolic consequences of ER oxidation. Activates the transcription of NLRP1, possibly in concert with other factors in response to ER stress. Activates the transcription of asparagine synthetase (ASNS) in response to amino acid deprivation or ER stress. However, when associated with DDIT3/CHOP, the transcriptional activation of the ASNS gene is inhibited in response to amino acid deprivation. Together with DDIT3/CHOP, mediates programmed cell death by promoting the expression of genes involved in cellular amino acid metabolic processes, mRNA translation and the terminal unfolded protein response (terminal UPR), a cellular response that elicits programmed cell death when ER stress is prolonged and unresolved. Activates the expression of COX7A2L/SCAF1 downstream of the EIF2AK3/PERK-mediated unfolded protein response, thereby promoting formation of respiratory chain supercomplexes and increasing mitochondrial oxidative phosphorylation. Together with DDIT3/CHOP, activates the transcription of the IRS-regulator TRIB3 and promotes ER stress-induced neuronal cell death by regulating the expression of BBC3/PUMA in response to ER stress. May cooperate with the UPR transcriptional regulator QRICH1 to regulate ER protein homeostasis which is critical for cell viability in response to ER stress. In the absence of stress, ATF4 translation is at low levels and it is required for normal metabolic processes such as embryonic lens formation, fetal liver hematopoiesis, bone development and synaptic plasticity. Acts as a regulator of osteoblast differentiation in response to phosphorylation by RPS6KA3/RSK2: phosphorylation in osteoblasts enhances transactivation activity and promotes expression of osteoblast-specific genes and post-transcriptionally regulates the synthesis of Type I collagen, the main constituent of the bone matrix. Cooperates with FOXO1 in osteoblasts to regulate glucose homeostasis through suppression of beta-cell production and decrease in insulin production. Activates transcription of SIRT4. Regulates the circadian expression of the core clock component PER2 and the serotonin transporter SLC6A4. Binds in a circadian time-dependent manner to the cAMP response elements (CRE) in the SLC6A4 and PER2 promoters and periodically activates the transcription of these genes. Mainly acts as a transcriptional activator in cellular stress adaptation, but it can also act as a transcriptional repressor: acts as a regulator of synaptic plasticity by repressing transcription, thereby inhibiting induction and maintenance of long-term memory. Regulates synaptic functions via interaction with DISC1 in neurons, which inhibits ATF4 transcription factor activity by disrupting ATF4 dimerization and DNA-binding. This Mus musculus (Mouse) protein is Cyclic AMP-dependent transcription factor ATF-4.